The sequence spans 36 residues: Defensin-like turtle egg white protein TEWP (36 aa).

At Q1 the chain carries Pyrrolidone carboxylic acid. Disulfide bonds link C4–C30, C8–C29, and C12–C24.

This sequence belongs to the beta-defensin family. As to quaternary structure, monomer. As to expression, detected in egg white (at protein level).

The protein localises to the secreted. Functionally, antibacterial and antiviral peptide. Has strong inhibitory activity towards E.coli and S.typhimurium. Has significant antiviral activity against Chandipura virus. This Caretta caretta (Loggerhead sea turtle) protein is Defensin-like turtle egg white protein TEWP.